Reading from the N-terminus, the 484-residue chain is Probable protein disulfide-isomerase ER-60 (484 aa).

The N-terminal stretch at 1-14 is a signal peptide; sequence MRWLLSCLFLVAFA. 2 consecutive Thioredoxin domains span residues 15 to 125 and 338 to 467; these read SCSK…SRAG and FEDG…REAT. Active-site nucleophile residues include C46, C49, C388, and C391. 2 disulfide bridges follow: C46–C49 and C388–C391. The Prevents secretion from ER motif lies at 481-484; it reads KSEL.

The protein belongs to the protein disulfide isomerase family.

The protein resides in the endoplasmic reticulum lumen. It catalyses the reaction Catalyzes the rearrangement of -S-S- bonds in proteins.. The polypeptide is Probable protein disulfide-isomerase ER-60 (Schistosoma mansoni (Blood fluke)).